We begin with the raw amino-acid sequence, 796 residues long: Cation/H(+) antiporter 6B (796 aa).

13 helical membrane-spanning segments follow: residues 54–74 (DFWEYPLPQLEIIILSIFLLW), 93–113 (SMMLVGAVLSEMFGSMQIPCL), 131–151 (IGAFAFVLDWFLRGVTTDVGI), 159–179 (SVVIGITSMIIPWQIGKLLYS), 194–213 (YTVMTFTMSMTPFTCVNMLL), 223–243 (FGQIAQSAGMVTDLLAFFLTV), 259–279 (LAFMAFFIFVYLVRQFMLWVI), 285–305 (GAPVKNVYLYIGLLLAYLSYL), 310–330 (FLFFGPLGAFALGLAVPNGPP), 344–364 (EGIFLPLFGSLSMIKLDWSFL), 382–402 (FSFLPIVYIAKFATSFLAALA), 411–431 (IILGVIMGTKSSFELGYVLTA), and 444–464 (LLGVYILVNSLLTPMAIHFLY).

Belongs to the monovalent cation:proton antiporter 2 (CPA2) transporter (TC 2.A.37) family. CHX (TC 2.A.37.4) subfamily. As to expression, preferentially expressed in pollen.

The protein resides in the membrane. In terms of biological role, may operate as a cation/H(+) antiporter. This is Cation/H(+) antiporter 6B (CHX6b) from Arabidopsis thaliana (Mouse-ear cress).